We begin with the raw amino-acid sequence, 841 residues long: mRNA export factor ICP27 homolog (841 aa).

Disordered stretches follow at residues 12–82 (PFAG…QYDK) and 115–163 (RAQG…TSPD). A compositionally biased stretch (low complexity) spans 32 to 49 (YSQQQSQHYYYGHNQSSY). Pro residues predominate over residues 66 to 79 (MPPPLSSPSSPPPQ). The segment covering 132–147 (SSLVSSNNSNNNTTLS) has biased composition (low complexity). Positions 298, 411, 413, and 418 each coordinate Zn(2+). The segment at 298 to 418 (CLLDSPGGGG…PGHRCQNEIC (121 aa)) adopts a CHC2-type zinc-finger fold. 2 disordered regions span residues 444–749 (HPNG…DDLH) and 774–811 (SVTPLAAPPSIRILDHEPGDAEEEEESDTDFYDETDQP). Residues 495–507 (VDSRGGGGDRRGD) show a composition bias toward basic and acidic residues. Over residues 514 to 526 (NHHRHHTRRARTR) the composition is skewed to basic residues. Residues 553 to 563 (RRGEAQRESNG) show a composition bias toward basic and acidic residues. Composition is skewed to low complexity over residues 568-579 (KSPSTVSSTTVH) and 591-603 (SRKSQQSQQQPET). A compositionally biased stretch (pro residues) spans 614-623 (MPPPPSPCSP). A compositionally biased stretch (basic and acidic residues) spans 641–657 (RPHDPPSGEPADAEKEL). Residues 688–699 (DSSSSSSDSSSS) show a composition bias toward low complexity. Residues 708–731 (EDCRELDLQSKRLEEALEERCERD) show a composition bias toward basic and acidic residues. 2 stretches are compositionally biased toward acidic residues: residues 732–749 (FEADDEEFAEPIEEDDLH) and 793–809 (DAEEEEESDTDFYDETD).

The protein belongs to the HHV-1 ICP27 protein family.

It is found in the virion tegument. The protein resides in the virion. It localises to the host nucleus. The protein localises to the host cytoplasm. Functionally, immediate early (EI) protein that plays many roles during productive infection including regulation of viral gene expression and nuclear export of intronless viral RNAs. The polypeptide is mRNA export factor ICP27 homolog (Mus musculus (Mouse)).